Here is a 1368-residue protein sequence, read N- to C-terminus: DNA-directed RNA polymerase subunit beta (1368 aa).

Belongs to the RNA polymerase beta chain family. In terms of assembly, the RNAP catalytic core consists of 2 alpha, 1 beta, 1 beta' and 1 omega subunit. When a sigma factor is associated with the core the holoenzyme is formed, which can initiate transcription.

It catalyses the reaction RNA(n) + a ribonucleoside 5'-triphosphate = RNA(n+1) + diphosphate. DNA-dependent RNA polymerase catalyzes the transcription of DNA into RNA using the four ribonucleoside triphosphates as substrates. The protein is DNA-directed RNA polymerase subunit beta of Cupriavidus pinatubonensis (strain JMP 134 / LMG 1197) (Cupriavidus necator (strain JMP 134)).